Consider the following 56-residue polypeptide: Ovomucoid (56 aa).

The region spanning 6–56 is the Kazal-like domain; it reads VDCSEYPKPACTLEYRPLCGSDSKTYANKCNFCNAVVESNGTLTLSHFGKC. 3 disulfide bridges follow: Cys8/Cys38, Cys16/Cys35, and Cys24/Cys56. Asn45 is a glycosylation site (N-linked (GlcNAc...) asparagine).

The protein resides in the secreted. The polypeptide is Ovomucoid (Oreortyx pictus (Mountain quail)).